Reading from the N-terminus, the 142-residue chain is Large ribosomal subunit protein uL13 (142 aa).

This sequence belongs to the universal ribosomal protein uL13 family. Part of the 50S ribosomal subunit.

Its function is as follows. This protein is one of the early assembly proteins of the 50S ribosomal subunit, although it is not seen to bind rRNA by itself. It is important during the early stages of 50S assembly. The protein is Large ribosomal subunit protein uL13 of Alkalilimnicola ehrlichii (strain ATCC BAA-1101 / DSM 17681 / MLHE-1).